A 269-amino-acid polypeptide reads, in one-letter code: Phosphatidylglycerol--prolipoprotein diacylglyceryl transferase (269 aa).

The next 7 helical transmembrane spans lie at 17–37, 59–79, 95–115, 123–143, 181–201, 206–226, and 242–262; these read IGPIAIRWYALAYIAGLMLGW, FLVWATMGVVLGGRLGYVLFY, WQGGMSFHGGALGVIVGIIAF, LFQVGDVICCAVPIGLFFGRI, AGLEGAVLFLVLFGLWRLTGI, GALSGVFLAGYGLARIASEFF, and MGQLLSIPQVLVGLALLAWAL. Position 142 (arginine 142) interacts with a 1,2-diacyl-sn-glycero-3-phospho-(1'-sn-glycerol).

Belongs to the Lgt family.

The protein localises to the cell inner membrane. It catalyses the reaction L-cysteinyl-[prolipoprotein] + a 1,2-diacyl-sn-glycero-3-phospho-(1'-sn-glycerol) = an S-1,2-diacyl-sn-glyceryl-L-cysteinyl-[prolipoprotein] + sn-glycerol 1-phosphate + H(+). Its pathway is protein modification; lipoprotein biosynthesis (diacylglyceryl transfer). Catalyzes the transfer of the diacylglyceryl group from phosphatidylglycerol to the sulfhydryl group of the N-terminal cysteine of a prolipoprotein, the first step in the formation of mature lipoproteins. This is Phosphatidylglycerol--prolipoprotein diacylglyceryl transferase from Paramagnetospirillum magneticum (strain ATCC 700264 / AMB-1) (Magnetospirillum magneticum).